The primary structure comprises 329 residues: Tryptophan--tRNA ligase (329 aa).

Residues 9 to 11 (QPS) and 17 to 18 (GN) each bind ATP. The 'HIGH' region signature appears at 10–18 (PSGIPTIGN). Aspartate 133 serves as a coordination point for L-tryptophan. Residues 145-147 (GDD), valine 184, and 193-197 (KMSKS) each bind ATP. Positions 193–197 (KMSKS) match the 'KMSKS' region motif.

The protein belongs to the class-I aminoacyl-tRNA synthetase family. In terms of assembly, homodimer.

It localises to the cytoplasm. The catalysed reaction is tRNA(Trp) + L-tryptophan + ATP = L-tryptophyl-tRNA(Trp) + AMP + diphosphate + H(+). Functionally, catalyzes the attachment of tryptophan to tRNA(Trp). This is Tryptophan--tRNA ligase from Staphylococcus aureus (strain MSSA476).